The primary structure comprises 440 residues: Ribulose bisphosphate carboxylase large chain (440 aa).

Lys-4 carries the post-translational modification N6,N6,N6-trimethyllysine. Residues Asn-113 and Thr-163 each contribute to the substrate site. Lys-165 acts as the Proton acceptor in catalysis. Lys-167 contacts substrate. Lys-191, Asp-193, and Glu-194 together coordinate Mg(2+). Lys-191 is subject to N6-carboxylysine. His-284 acts as the Proton acceptor in catalysis. Residues Arg-285, His-317, and Ser-369 each coordinate substrate.

This sequence belongs to the RuBisCO large chain family. Type I subfamily. As to quaternary structure, heterohexadecamer of 8 large chains and 8 small chains; disulfide-linked. The disulfide link is formed within the large subunit homodimers. Requires Mg(2+) as cofactor. Post-translationally, the disulfide bond which can form in the large chain dimeric partners within the hexadecamer appears to be associated with oxidative stress and protein turnover.

It localises to the plastid. The protein localises to the chloroplast. The catalysed reaction is 2 (2R)-3-phosphoglycerate + 2 H(+) = D-ribulose 1,5-bisphosphate + CO2 + H2O. It catalyses the reaction D-ribulose 1,5-bisphosphate + O2 = 2-phosphoglycolate + (2R)-3-phosphoglycerate + 2 H(+). RuBisCO catalyzes two reactions: the carboxylation of D-ribulose 1,5-bisphosphate, the primary event in carbon dioxide fixation, as well as the oxidative fragmentation of the pentose substrate in the photorespiration process. Both reactions occur simultaneously and in competition at the same active site. The polypeptide is Ribulose bisphosphate carboxylase large chain (Dicksonia antarctica (Australian tree fern)).